We begin with the raw amino-acid sequence, 147 residues long: Protein phosphatase 1 regulatory subunit 14A (147 aa).

A compositionally biased stretch (basic residues) spans 1–11 (MAAQRLGKRVL). The tract at residues 1–37 (MAAQRLGKRVLSKLQSPSRARGPGGSPSGLQKRHARV) is disordered. Ser-26 is subject to Phosphoserine. The interval 35–120 (ARVTVKYDRR…LLAKLRGLHK (86 aa)) is inhibitory. Position 38 is a phosphothreonine (Thr-38). The disordered stretch occupies residues 118-147 (LHKQPGFPQPSPSDDPSLSPRQDPAHTAPP). Ser-128, Ser-134, and Ser-136 each carry phosphoserine.

It belongs to the PP1 inhibitor family.

The protein localises to the cytoplasm. Functionally, inhibitor of PPP1CA. Has over 1000-fold higher inhibitory activity when phosphorylated, creating a molecular switch for regulating the phosphorylation status of PPP1CA substrates and smooth muscle contraction. The polypeptide is Protein phosphatase 1 regulatory subunit 14A (Ppp1r14a) (Rattus norvegicus (Rat)).